The primary structure comprises 387 residues: GTPase Obg (387 aa).

The Obg domain occupies 1-159 (MKFVDEVEIR…RSLKLELLLL (159 aa)). Residues 160 to 333 (ADVGLLGLPN…LTQKVMTFIE (174 aa)) enclose the OBG-type G domain. GTP contacts are provided by residues 166 to 173 (GLPNAGKS), 191 to 195 (FTTLV), 213 to 216 (DIPG), 283 to 286 (NKLD), and 314 to 316 (SAF). Residues serine 173 and threonine 193 each contribute to the Mg(2+) site. The interval 361–387 (AAHSQDDDLDDDDWDEDDYDVEVEYRQ) is disordered. Residues 367 to 387 (DDLDDDDWDEDDYDVEVEYRQ) show a composition bias toward acidic residues.

The protein belongs to the TRAFAC class OBG-HflX-like GTPase superfamily. OBG GTPase family. In terms of assembly, monomer. It depends on Mg(2+) as a cofactor.

The protein resides in the cytoplasm. Functionally, an essential GTPase which binds GTP, GDP and possibly (p)ppGpp with moderate affinity, with high nucleotide exchange rates and a fairly low GTP hydrolysis rate. Plays a role in control of the cell cycle, stress response, ribosome biogenesis and in those bacteria that undergo differentiation, in morphogenesis control. This chain is GTPase Obg, found in Colwellia psychrerythraea (strain 34H / ATCC BAA-681) (Vibrio psychroerythus).